A 444-amino-acid polypeptide reads, in one-letter code: Acyl-CoA (8-3)-desaturase (444 aa).

Methionine 1 bears the N-acetylmethionine mark. Topologically, residues 1 to 121 are cytoplasmic; it reads MAPDPVAAET…FRELRATVER (121 aa). In terms of domain architecture, Cytochrome b5 heme-binding spans 17 to 94; that stretch reads PRYFTWDEVA…MNSLLIGELS (78 aa). The chain crosses the membrane as a helical span at residues 122 to 142; the sequence is MGLMKANHVFFLLYLLHILLL. The Lumenal portion of the chain corresponds to 143–145; that stretch reads DGA. Residues 146–170 form a helical membrane-spanning segment; that stretch reads AWLTLWVFGTSFLPFLLCAVLLSAV. The Cytoplasmic segment spans residues 171–267; that stretch reads QAQAGWLQHD…PYNHQHKYFF (97 aa). Positions 179 to 183 match the Histidine box-1 motif; the sequence is HDFGH. Residues 216–220 carry the Histidine box-2 motif; sequence HFQHH. A helical transmembrane segment spans residues 268 to 288; sequence LIGPPALLPLYFQWYIFYFVI. At 289–305 the chain is on the lumenal side; that stretch reads QRKKWVDLAWMITFYVR. A helical transmembrane segment spans residues 306 to 326; it reads FFLTYVPLLGLKAFLGLFFIV. The Cytoplasmic segment spans residues 327-444; that stretch reads RFLESNWFVW…QLWLDAYLHQ (118 aa). A Histidine box-3 motif is present at residues 382-386; sequence QIEHH.

The protein belongs to the fatty acid desaturase type 1 family. In terms of tissue distribution, widely expressed, with highest levels in liver, brain, adrenal gland and heart. Highly expressed in fetal liver and brain.

The protein localises to the endoplasmic reticulum membrane. The protein resides in the mitochondrion. It carries out the reaction (8Z,11Z,14Z)-eicosatrienoyl-CoA + 2 Fe(II)-[cytochrome b5] + O2 + 2 H(+) = (5Z,8Z,11Z,14Z)-eicosatetraenoyl-CoA + 2 Fe(III)-[cytochrome b5] + 2 H2O. It catalyses the reaction (8Z,11Z,14Z,17Z)-eicosatetraenoyl-CoA + 2 Fe(II)-[cytochrome b5] + O2 + 2 H(+) = (5Z,8Z,11Z,14Z,17Z)-eicosapentaenoyl-CoA + 2 Fe(III)-[cytochrome b5] + 2 H2O. The enzyme catalyses (11E)-octadecenoyl-CoA + 2 Fe(II)-[cytochrome b5] + O2 + 2 H(+) = (5Z,11E)-octadecadienoyl-CoA + 2 Fe(III)-[cytochrome b5] + 2 H2O. It functions in the pathway lipid metabolism; polyunsaturated fatty acid biosynthesis. Its function is as follows. Acts as a front-end fatty acyl-coenzyme A (CoA) desaturase that introduces a cis double bond at carbon 5 located between a preexisting double bond and the carboxyl end of the fatty acyl chain. Involved in biosynthesis of highly unsaturated fatty acids (HUFA) from the essential polyunsaturated fatty acids (PUFA) linoleic acid (LA) (18:2n-6) and alpha-linolenic acid (ALA) (18:3n-3) precursors. Specifically, desaturates dihomo-gamma-linoleoate (DGLA) (20:3n-6) and eicosatetraenoate (ETA) (20:4n-3) to generate arachidonate (AA) (20:4n-6) and eicosapentaenoate (EPA) (20:5n-3), respectively. As a rate limiting enzyme for DGLA (20:3n-6) and AA (20:4n-6)-derived eicosanoid biosynthesis, controls the metabolism of inflammatory lipids like prostaglandin E2, critical for efficient acute inflammatory response and maintenance of epithelium homeostasis. Contributes to membrane phospholipid biosynthesis by providing AA (20:4n-6) as a major acyl chain esterified into phospholipids. In particular, regulates phosphatidylinositol-4,5-bisphosphate levels, modulating inflammatory cytokine production in T-cells. Also desaturates (11E)-octadecenoate (trans-vaccenoate)(18:1n-9), a metabolite in the biohydrogenation pathway of LA (18:2n-6). Functionally, does not exhibit any catalytic activity toward 20:3n-6, but it may enhance FADS2 activity. The protein is Acyl-CoA (8-3)-desaturase of Homo sapiens (Human).